Consider the following 508-residue polypeptide: Photosystem II CP47 reaction center protein (508 aa).

A run of 6 helical transmembrane segments spans residues 21–36 (AVHI…WAGS), 101–115 (IVFS…IWHW), 140–156 (GIHL…FGAF), 203–218 (IAAG…FHLS), 237–252 (VLSS…AFVV), and 457–472 (SFAL…HGSR).

This sequence belongs to the PsbB/PsbC family. PsbB subfamily. As to quaternary structure, PSII is composed of 1 copy each of membrane proteins PsbA, PsbB, PsbC, PsbD, PsbE, PsbF, PsbH, PsbI, PsbJ, PsbK, PsbL, PsbM, PsbT, PsbX, PsbY, PsbZ, Psb30/Ycf12, at least 3 peripheral proteins of the oxygen-evolving complex and a large number of cofactors. It forms dimeric complexes. Binds multiple chlorophylls. PSII binds additional chlorophylls, carotenoids and specific lipids. serves as cofactor.

The protein resides in the plastid. Its subcellular location is the chloroplast thylakoid membrane. Functionally, one of the components of the core complex of photosystem II (PSII). It binds chlorophyll and helps catalyze the primary light-induced photochemical processes of PSII. PSII is a light-driven water:plastoquinone oxidoreductase, using light energy to abstract electrons from H(2)O, generating O(2) and a proton gradient subsequently used for ATP formation. The protein is Photosystem II CP47 reaction center protein of Lotus japonicus (Lotus corniculatus var. japonicus).